The sequence spans 860 residues: Leucine--tRNA ligase (860 aa).

Positions 42-52 match the 'HIGH' region motif; that stretch reads PYPSGRLHMGH. Positions 619–623 match the 'KMSKS' region motif; it reads KMSKS. Residue Lys622 participates in ATP binding.

This sequence belongs to the class-I aminoacyl-tRNA synthetase family.

The protein localises to the cytoplasm. The enzyme catalyses tRNA(Leu) + L-leucine + ATP = L-leucyl-tRNA(Leu) + AMP + diphosphate. This is Leucine--tRNA ligase from Sodalis glossinidius (strain morsitans).